The primary structure comprises 240 residues: Uridylate kinase (240 aa).

13–16 (KASG) serves as a coordination point for ATP. Residues 21 to 26 (GGQGFG) are involved in allosteric activation by GTP. Gly55 contributes to the UMP binding site. Gly56 and Arg60 together coordinate ATP. Residues Asp75 and 136–143 (TGNPFFTT) each bind UMP. Thr163, Gln164, Tyr169, and Asp172 together coordinate ATP.

The protein belongs to the UMP kinase family. In terms of assembly, homohexamer.

The protein localises to the cytoplasm. The enzyme catalyses UMP + ATP = UDP + ADP. It participates in pyrimidine metabolism; CTP biosynthesis via de novo pathway; UDP from UMP (UMPK route): step 1/1. Allosterically activated by GTP. Inhibited by UTP. Functionally, catalyzes the reversible phosphorylation of UMP to UDP. The protein is Uridylate kinase of Rhizobium johnstonii (strain DSM 114642 / LMG 32736 / 3841) (Rhizobium leguminosarum bv. viciae).